The sequence spans 490 residues: Aspartyl/glutamyl-tRNA(Asn/Gln) amidotransferase subunit B (490 aa).

The protein belongs to the GatB/GatE family. GatB subfamily. In terms of assembly, heterotrimer of A, B and C subunits.

The catalysed reaction is L-glutamyl-tRNA(Gln) + L-glutamine + ATP + H2O = L-glutaminyl-tRNA(Gln) + L-glutamate + ADP + phosphate + H(+). The enzyme catalyses L-aspartyl-tRNA(Asn) + L-glutamine + ATP + H2O = L-asparaginyl-tRNA(Asn) + L-glutamate + ADP + phosphate + 2 H(+). Functionally, allows the formation of correctly charged Asn-tRNA(Asn) or Gln-tRNA(Gln) through the transamidation of misacylated Asp-tRNA(Asn) or Glu-tRNA(Gln) in organisms which lack either or both of asparaginyl-tRNA or glutaminyl-tRNA synthetases. The reaction takes place in the presence of glutamine and ATP through an activated phospho-Asp-tRNA(Asn) or phospho-Glu-tRNA(Gln). The sequence is that of Aspartyl/glutamyl-tRNA(Asn/Gln) amidotransferase subunit B from Prochlorococcus marinus (strain MIT 9515).